The sequence spans 260 residues: 5-oxoprolinase subunit A (260 aa).

It belongs to the LamB/PxpA family. In terms of assembly, forms a complex composed of PxpA, PxpB and PxpC.

The enzyme catalyses 5-oxo-L-proline + ATP + 2 H2O = L-glutamate + ADP + phosphate + H(+). Its function is as follows. Catalyzes the cleavage of 5-oxoproline to form L-glutamate coupled to the hydrolysis of ATP to ADP and inorganic phosphate. The chain is 5-oxoprolinase subunit A from Methylococcus capsulatus (strain ATCC 33009 / NCIMB 11132 / Bath).